We begin with the raw amino-acid sequence, 358 residues long: D-alanine--D-alanine ligase B (358 aa).

The ATP-grasp domain occupies 147–352 (KYVLENFKFK…YSALIDELIE (206 aa)). Position 179 to 234 (179 to 234 (VEKLQYDVFIKPANSGSSVGITKAHNKEELLKGLEEAFIHDKNVLVEEAINAREIE)) interacts with ATP. Mg(2+) is bound by residues D305, E319, and N321.

This sequence belongs to the D-alanine--D-alanine ligase family. Requires Mg(2+) as cofactor. It depends on Mn(2+) as a cofactor.

The protein resides in the cytoplasm. The catalysed reaction is 2 D-alanine + ATP = D-alanyl-D-alanine + ADP + phosphate + H(+). It functions in the pathway cell wall biogenesis; peptidoglycan biosynthesis. Cell wall formation. This chain is D-alanine--D-alanine ligase B, found in Clostridium tetani (strain Massachusetts / E88).